A 369-amino-acid polypeptide reads, in one-letter code: DNA replication and repair protein RecF (369 aa).

30-37 serves as a coordination point for ATP; that stretch reads GRNAQGKT.

It belongs to the RecF family.

The protein localises to the cytoplasm. Functionally, the RecF protein is involved in DNA metabolism; it is required for DNA replication and normal SOS inducibility. RecF binds preferentially to single-stranded, linear DNA. It also seems to bind ATP. The chain is DNA replication and repair protein RecF from Streptococcus agalactiae serotype Ia (strain ATCC 27591 / A909 / CDC SS700).